The chain runs to 295 residues: N-acetylmuramic acid 6-phosphate etherase (295 aa).

The SIS domain occupies 54-217 (VIAAFRRGGR…STASMVGIGK (164 aa)). Glutamate 82 functions as the Proton donor in the catalytic mechanism. Glutamate 113 is an active-site residue.

The protein belongs to the GCKR-like family. MurNAc-6-P etherase subfamily. As to quaternary structure, homodimer.

It catalyses the reaction N-acetyl-D-muramate 6-phosphate + H2O = N-acetyl-D-glucosamine 6-phosphate + (R)-lactate. Its pathway is amino-sugar metabolism; N-acetylmuramate degradation. In terms of biological role, specifically catalyzes the cleavage of the D-lactyl ether substituent of MurNAc 6-phosphate, producing GlcNAc 6-phosphate and D-lactate. This Geobacillus thermodenitrificans (strain NG80-2) protein is N-acetylmuramic acid 6-phosphate etherase.